The chain runs to 219 residues: Pyridoxine/pyridoxamine 5'-phosphate oxidase (219 aa).

The disordered stretch occupies residues 1–23; the sequence is MTSSVIPPSPSAADYAAEGDRPL. FMN-binding positions include 66–71, 81–82, Lys-88, and Gln-110; these read RIVLLK and FT. Lys-71 provides a ligand contact to substrate. Positions 128, 132, and 136 each coordinate substrate. FMN contacts are provided by residues 145 to 146 and Trp-191; that span reads QS. Position 197-199 (197-199) interacts with substrate; it reads RMH. Arg-201 serves as a coordination point for FMN.

It belongs to the pyridoxamine 5'-phosphate oxidase family. Homodimer. Requires FMN as cofactor.

The catalysed reaction is pyridoxamine 5'-phosphate + O2 + H2O = pyridoxal 5'-phosphate + H2O2 + NH4(+). It carries out the reaction pyridoxine 5'-phosphate + O2 = pyridoxal 5'-phosphate + H2O2. Its pathway is cofactor metabolism; pyridoxal 5'-phosphate salvage; pyridoxal 5'-phosphate from pyridoxamine 5'-phosphate: step 1/1. The protein operates within cofactor metabolism; pyridoxal 5'-phosphate salvage; pyridoxal 5'-phosphate from pyridoxine 5'-phosphate: step 1/1. Functionally, catalyzes the oxidation of either pyridoxine 5'-phosphate (PNP) or pyridoxamine 5'-phosphate (PMP) into pyridoxal 5'-phosphate (PLP). The chain is Pyridoxine/pyridoxamine 5'-phosphate oxidase from Hyphomonas neptunium (strain ATCC 15444).